We begin with the raw amino-acid sequence, 158 residues long: Frataxin homolog, mitochondrial (158 aa).

This sequence belongs to the frataxin family. In terms of assembly, monomer. Oligomer.

The protein localises to the mitochondrion. The enzyme catalyses 4 Fe(2+) + O2 + 4 H(+) = 4 Fe(3+) + 2 H2O. In terms of biological role, promotes the biosynthesis of heme as well as the assembly and repair of iron-sulfur clusters by delivering Fe(2+) to proteins involved in these pathways. May play a role in the protection against iron-catalyzed oxidative stress through its ability to catalyze the oxidation of Fe(2+) to Fe(3+). May be able to store large amounts of the metal in the form of a ferrihydrite mineral by oligomerization. This is Frataxin homolog, mitochondrial from Schizosaccharomyces pombe (strain 972 / ATCC 24843) (Fission yeast).